The chain runs to 80 residues: RNA-binding protein Hfq (80 aa).

A Sm domain is found at 10 to 70; that stretch reads DIFLNNARKE…ISTVSPAKPI (61 aa).

It belongs to the Hfq family. As to quaternary structure, homohexamer.

In terms of biological role, RNA chaperone that binds small regulatory RNA (sRNAs) and mRNAs to facilitate mRNA translational regulation in response to envelope stress, environmental stress and changes in metabolite concentrations. Also binds with high specificity to tRNAs. This Clostridium perfringens (strain SM101 / Type A) protein is RNA-binding protein Hfq.